A 102-amino-acid polypeptide reads, in one-letter code: Putative pterin-4-alpha-carbinolamine dehydratase (102 aa).

The protein belongs to the pterin-4-alpha-carbinolamine dehydratase family.

The catalysed reaction is (4aS,6R)-4a-hydroxy-L-erythro-5,6,7,8-tetrahydrobiopterin = (6R)-L-erythro-6,7-dihydrobiopterin + H2O. This Psychromonas ingrahamii (strain DSM 17664 / CCUG 51855 / 37) protein is Putative pterin-4-alpha-carbinolamine dehydratase.